The following is a 573-amino-acid chain: Putative ATP-dependent RNA helicase R563 (573 aa).

Positions 57–233 (INPKTPYKGL…ALTMNLLVRN (177 aa)) constitute a Helicase ATP-binding domain. 70–77 (HRIGAGKT) serves as a coordination point for ATP. The DEAH box signature appears at 179-182 (DEVH). The Helicase C-terminal domain maps to 374–551 (KILRKIKRCN…AFEKALKEAA (178 aa)).

Belongs to the DEAD box helicase family. DEAH subfamily.

Its subcellular location is the virion. It catalyses the reaction ATP + H2O = ADP + phosphate + H(+). In Acanthamoeba polyphaga mimivirus (APMV), this protein is Putative ATP-dependent RNA helicase R563.